A 312-amino-acid polypeptide reads, in one-letter code: 4-diphosphocytidyl-2-C-methyl-D-erythritol kinase (312 aa).

Lys-16 is an active-site residue. An ATP-binding site is contributed by Pro-101 to Ser-111. Asp-143 is an active-site residue.

Belongs to the GHMP kinase family. IspE subfamily.

It catalyses the reaction 4-CDP-2-C-methyl-D-erythritol + ATP = 4-CDP-2-C-methyl-D-erythritol 2-phosphate + ADP + H(+). The protein operates within isoprenoid biosynthesis; isopentenyl diphosphate biosynthesis via DXP pathway; isopentenyl diphosphate from 1-deoxy-D-xylulose 5-phosphate: step 3/6. Functionally, catalyzes the phosphorylation of the position 2 hydroxy group of 4-diphosphocytidyl-2C-methyl-D-erythritol. This is 4-diphosphocytidyl-2-C-methyl-D-erythritol kinase from Prochlorococcus marinus (strain MIT 9515).